Reading from the N-terminus, the 408-residue chain is L,D-transpeptidase 2 (408 aa).

Residues 1-34 (MPKVGIAAQAGRTRVRRAWLTALMMTAVMIGAVA) form the signal peptide. Cys35 is lipidated: N-palmitoyl cysteine. Residue Cys35 is the site of S-diacylglycerol cysteine attachment. Ca(2+)-binding residues include Asp232, Glu235, and Gly236. The region spanning 253 to 378 (VIATADDNTK…VKRGDIVEVV (126 aa)) is the L,D-TPase catalytic domain. Residues Tyr318 and 331–332 (SG) each bind substrate. His336 functions as the Proton donor/acceptor in the catalytic mechanism. The Nucleophile role is filled by Cys354. Residue Asn356 participates in substrate binding.

As to quaternary structure, monomer.

The protein resides in the cell membrane. It functions in the pathway cell wall biogenesis; peptidoglycan biosynthesis. Is irreversibly inactivated by the beta-lactams carbapenems via the formation of a covalent adduct resulting from acylation of the catalytic Cys. In terms of biological role, generates 3-&gt;3 cross-links in peptidoglycan, catalyzing the cleavage of the mDap(3)-D-Ala(4) bond of a tetrapeptide donor stem and the formation of a bond between the carbonyl of mDap(3) of the donor stem and the side chain of mDap(3) of the acceptor stem. Is specific for donor substrates containing a stem tetrapeptide since it cannot use pentapeptide stems. Is essential for virulence in a mouse model of acute infection. The sequence is that of L,D-transpeptidase 2 (ldtB) from Mycobacterium tuberculosis (strain CDC 1551 / Oshkosh).